Here is a 144-residue protein sequence, read N- to C-terminus: Putative pre-16S rRNA nuclease (144 aa).

Belongs to the YqgF nuclease family.

The protein localises to the cytoplasm. Its function is as follows. Could be a nuclease involved in processing of the 5'-end of pre-16S rRNA. In Pseudomonas aeruginosa (strain LESB58), this protein is Putative pre-16S rRNA nuclease.